A 97-amino-acid polypeptide reads, in one-letter code: Thiosulfate sulfurtransferase/rhodanese-like domain-containing protein 3 (97 aa).

A Rhodanese domain is found at 32-84 (YKELKNLLNSKNIMLIDVREIWEILEYQKIPESINVPLDEVGEALQMNPRDFK). N6-succinyllysine is present on K84.

The protein is Thiosulfate sulfurtransferase/rhodanese-like domain-containing protein 3 (TSTD3) of Homo sapiens (Human).